A 407-amino-acid polypeptide reads, in one-letter code: Cysteine desulfurase (407 aa).

Lys-226 carries the N6-(pyridoxal phosphate)lysine modification. The Cysteine persulfide intermediate role is filled by Cys-364.

The protein belongs to the class-V pyridoxal-phosphate-dependent aminotransferase family. Csd subfamily. Homodimer. Interacts with SufE and the SufBCD complex composed of SufB, SufC and SufD. The interaction with SufE is required to mediate the direct transfer of the sulfur atom from the S-sulfanylcysteine. It depends on pyridoxal 5'-phosphate as a cofactor.

It is found in the cytoplasm. It catalyses the reaction (sulfur carrier)-H + L-cysteine = (sulfur carrier)-SH + L-alanine. It carries out the reaction L-selenocysteine + AH2 = hydrogenselenide + L-alanine + A + H(+). Its pathway is cofactor biosynthesis; iron-sulfur cluster biosynthesis. In terms of biological role, cysteine desulfurases mobilize the sulfur from L-cysteine to yield L-alanine, an essential step in sulfur metabolism for biosynthesis of a variety of sulfur-containing biomolecules. Component of the suf operon, which is activated and required under specific conditions such as oxidative stress and iron limitation. Acts as a potent selenocysteine lyase in vitro, that mobilizes selenium from L-selenocysteine. Selenocysteine lyase activity is however unsure in vivo. This is Cysteine desulfurase from Pectobacterium atrosepticum (strain SCRI 1043 / ATCC BAA-672) (Erwinia carotovora subsp. atroseptica).